The primary structure comprises 80 residues: Defensin coprisin (80 aa).

The first 20 residues, 1 to 20 (MAKLIAFALVASLCLSMVLC), serve as a signal peptide directing secretion. Residues 21–37 (NPLPEEVQEEGLVRQKR) constitute a propeptide that is removed on maturation. 3 cysteine pairs are disulfide-bonded: Cys-40-Cys-71, Cys-57-Cys-76, and Cys-61-Cys-78.

This sequence belongs to the invertebrate defensin family. Type 1 subfamily.

It is found in the secreted. The protein localises to the target cell membrane. Functionally, potent broad-spectrum antibacterial peptide against both Gram-positive (B.subtilis, S.epidermidis, and S.aureus) and Gram-negative bacteria (E.coli, S.typhimurium, and P.aeruginosa). Is also active against all antibiotic-resistant bacterial strains tested. Induces apoptosis in C.albicans, but does not disrupt the fungal plasma membrane at all. Acts by permeabilizing the bacterial cell membrane, but not human membranes. Also shows potent anti-inflammatory activities, since it reduces both LPS-induced nitric oxide release and pro-inflammatory cytokine production. Anti-inflammatory activities are initiated by suppressing the binding of LPS to toll-like receptor 4 (TLR4), and subsequently inhibiting the phosphorylation of p38 mitogen-activated protein kinase (MAPK) and nuclear translocation of NF-kB (TNFRSF11A). Does not show hemolytic activity against human erythrocytes. The polypeptide is Defensin coprisin (Copris tripartitus (Dung beetle)).